Reading from the N-terminus, the 356-residue chain is Isopentenyl-diphosphate delta-isomerase (356 aa).

Residue 8–9 coordinates substrate; it reads RK. FMN is bound by residues 66–68, S96, and N124; that span reads AIT. 96-98 serves as a coordination point for substrate; the sequence is SQR. Position 160 (Q160) interacts with substrate. E161 contributes to the Mg(2+) binding site. FMN-binding positions include K201, T231, 280–282, and 301–302; these read GIR and AL.

It belongs to the IPP isomerase type 2 family. As to quaternary structure, homooctamer. Dimer of tetramers. Requires FMN as cofactor. NADPH is required as a cofactor. The cofactor is Mg(2+).

Its subcellular location is the cytoplasm. It catalyses the reaction isopentenyl diphosphate = dimethylallyl diphosphate. In terms of biological role, involved in the biosynthesis of isoprenoids. Catalyzes the 1,3-allylic rearrangement of the homoallylic substrate isopentenyl (IPP) to its allylic isomer, dimethylallyl diphosphate (DMAPP). The protein is Isopentenyl-diphosphate delta-isomerase of Methanococcus aeolicus (strain ATCC BAA-1280 / DSM 17508 / OCM 812 / Nankai-3).